Reading from the N-terminus, the 227-residue chain is Cytidylate kinase (227 aa).

12-20 (GPSGAGKGT) is a binding site for ATP.

It belongs to the cytidylate kinase family. Type 1 subfamily.

Its subcellular location is the cytoplasm. It carries out the reaction CMP + ATP = CDP + ADP. The enzyme catalyses dCMP + ATP = dCDP + ADP. The chain is Cytidylate kinase from Xanthomonas oryzae pv. oryzae (strain PXO99A).